Consider the following 561-residue polypeptide: 4-coumarate--CoA ligase 1 (561 aa).

Positions 210, 211, 212, 213, 214, and 218 each coordinate ATP. (E)-4-coumaroyl-AMP contacts are provided by Tyr260 and Ser264. Position 281 (Lys281) interacts with CoA. The SBD1 stretch occupies residues 283 to 352 (EINLLLELIQ…AKFPNAKLGQ (70 aa)). Positions 330, 352, 353, 357, and 365 each coordinate (E)-4-coumaroyl-AMP. Residues Gln352, Gly353, and Thr357 each contribute to the ATP site. Residues 353–420 (GYGMTEAGPV…IRGHQIMKGY (68 aa)) are SBD2. ATP-binding residues include Asp441 and Arg456. (E)-4-coumaroyl-AMP-binding residues include Lys458 and Lys462. Residues Lys464 and Gly465 each coordinate CoA. ATP is bound at residue Lys547.

It belongs to the ATP-dependent AMP-binding enzyme family. Mg(2+) is required as a cofactor. Preferentially expressed in roots, bolting stems and siliques. Also detected in leaves.

The enzyme catalyses (E)-4-coumarate + ATP + CoA = (E)-4-coumaroyl-CoA + AMP + diphosphate. It catalyses the reaction (E)-caffeate + ATP + CoA = (E)-caffeoyl-CoA + AMP + diphosphate. It carries out the reaction (E)-ferulate + ATP + CoA = (E)-feruloyl-CoA + AMP + diphosphate. The catalysed reaction is (E)-4-coumarate + ATP + H(+) = (E)-4-coumaroyl-AMP + diphosphate. The enzyme catalyses (E)-4-coumaroyl-AMP + CoA = (E)-4-coumaroyl-CoA + AMP + H(+). It catalyses the reaction (E)-caffeate + ATP + H(+) = (E)-caffeoyl-AMP + diphosphate. It carries out the reaction (E)-caffeoyl-AMP + CoA = (E)-caffeoyl-CoA + AMP + H(+). The catalysed reaction is (E)-ferulate + ATP + H(+) = (E)-feruloyl-AMP + diphosphate. The enzyme catalyses (E)-feruloyl-AMP + CoA = (E)-feruloyl-CoA + AMP + H(+). Its pathway is phytoalexin biosynthesis; 3,4',5-trihydroxystilbene biosynthesis; 3,4',5-trihydroxystilbene from trans-4-coumarate: step 1/2. Its function is as follows. Produces CoA thioesters of a variety of hydroxy- and methoxy-substituted cinnamic acids, which are used to synthesize several phenylpropanoid-derived compounds, including anthocyanins, flavonoids, isoflavonoids, coumarins, lignin, suberin and wall-bound phenolics. Follows a two-step reaction mechanism, wherein the carboxylate substrate first undergoes adenylation by ATP, followed by a thioesterification in the presence of CoA to yield the final CoA thioesters. The protein is 4-coumarate--CoA ligase 1 of Arabidopsis thaliana (Mouse-ear cress).